The chain runs to 192 residues: Per os infectivity factor 6 (192 aa).

The chain crosses the membrane as a helical span at residues 154 to 174 (IAYVFLFFICIVLLSVLAVFF).

It localises to the host membrane. Its subcellular location is the virion. The protein localises to the host cytoplasm. It is found in the host nucleus. Its function is as follows. Per os infectivity factor. The chain is Per os infectivity factor 6 (AC68) from Autographa californica nuclear polyhedrosis virus (AcMNPV).